The primary structure comprises 359 residues: 3-dehydroshikimate dehydratase (359 aa).

The protein belongs to the bacterial two-domain DSD family. As to quaternary structure, monomer.

The enzyme catalyses 3-dehydroshikimate = 3,4-dihydroxybenzoate + H2O. The protein operates within aromatic compound metabolism; 3,4-dihydroxybenzoate biosynthesis; 3,4-dihydroxybenzoate from 3-dehydroquinate: step 2/2. Divalent cations such as Mg(2+), but also MO(2+), Mn(2+), Ba(2+), and Co(2+) activate the enzyme, whereas monovalent cations as K(+), Na(+), and NH4(+) decrease its activity slightly. In terms of biological role, 3-dehydroshikimate dehydratase; part of the qa gene cluster that mediates the catabolism of quinic acid (QA) and as such, allows the use of QA as a sole carbon source. Catalyzes the third reaction in the inducible quinic acid catabolic pathway by converting dehydroshikimate to protocatechuate. The qa cluster encodes 3 inducible enymes (qa-2, qa-3 and qa-4) catalyzing the first three reactions in the catabolism of quinic acid to protocatechuic acid (also known as 3,4-Dihydroxybenzoic acid). This Neurospora crassa (strain ATCC 24698 / 74-OR23-1A / CBS 708.71 / DSM 1257 / FGSC 987) protein is 3-dehydroshikimate dehydratase.